The chain runs to 326 residues: NADH-ubiquinone oxidoreductase chain 1 (326 aa).

Transmembrane regions (helical) follow at residues 1 to 21, 41 to 61, 72 to 92, 104 to 124, 152 to 172, 177 to 197, 234 to 256, 268 to 288, and 303 to 323; these read MFLL…LVAV, PNIV…KLFV, IIIF…SWCV, INIG…GIIT, IGLI…TEIV, SIWF…SILA, YANM…LPPF, VWFG…RSSF, and ILLP…LSFN.

This sequence belongs to the complex I subunit 1 family.

The protein resides in the mitochondrion inner membrane. The enzyme catalyses a ubiquinone + NADH + 5 H(+)(in) = a ubiquinol + NAD(+) + 4 H(+)(out). Its function is as follows. Core subunit of the mitochondrial membrane respiratory chain NADH dehydrogenase (Complex I) that is believed to belong to the minimal assembly required for catalysis. Complex I functions in the transfer of electrons from NADH to the respiratory chain. The immediate electron acceptor for the enzyme is believed to be ubiquinone. The protein is NADH-ubiquinone oxidoreductase chain 1 (ND1) of Chondrus crispus (Carrageen Irish moss).